The primary structure comprises 351 residues: MNDRLITPDASGEDEAIDRAIRPRRLTDYIGQPVVREQMEIFVHAARGRGEALDHTLIFGPPGLGKTTLAHIIANEMGVSMRQTSGPVLDKPGDLAALLTNLEPHDVLFVDEIHRLSAVVEEVLYPAMEDFQIDIMIGEGPAARSIKLDLPPFTLVGATTRAGLLTSPLRDRFGIVQRLEYYNVADLSGIVKRSAHLLNLSIDETGCQEIAGRARGTPRIANRLLRRVRDYAEVRADGHISGEVAHAAMELLNVDRNGFDEQDRRLLLAIMEKFDGGPVGLDSIAAAIGEERGTIEDVVEPYLIQQGYLMRTPRGRMATRNAWLHFGLNPPRQPDTSPDLFQDAPPVGRER.

The large ATPase domain (RuvB-L) stretch occupies residues Met1–Tyr182. ATP is bound by residues Ile21, Arg22, Gly63, Lys66, Thr67, Thr68, Glu129 to Phe131, Arg172, Tyr182, and Arg219. Residue Thr67 coordinates Mg(2+). The small ATPAse domain (RuvB-S) stretch occupies residues Asn183–Asn253. The segment at Arg256 to Arg351 is head domain (RuvB-H). Arg292, Arg311, and Arg316 together coordinate DNA. A disordered region spans residues Leu328–Arg351.

Belongs to the RuvB family. As to quaternary structure, homohexamer. Forms an RuvA(8)-RuvB(12)-Holliday junction (HJ) complex. HJ DNA is sandwiched between 2 RuvA tetramers; dsDNA enters through RuvA and exits via RuvB. An RuvB hexamer assembles on each DNA strand where it exits the tetramer. Each RuvB hexamer is contacted by two RuvA subunits (via domain III) on 2 adjacent RuvB subunits; this complex drives branch migration. In the full resolvosome a probable DNA-RuvA(4)-RuvB(12)-RuvC(2) complex forms which resolves the HJ.

The protein resides in the cytoplasm. The enzyme catalyses ATP + H2O = ADP + phosphate + H(+). In terms of biological role, the RuvA-RuvB-RuvC complex processes Holliday junction (HJ) DNA during genetic recombination and DNA repair, while the RuvA-RuvB complex plays an important role in the rescue of blocked DNA replication forks via replication fork reversal (RFR). RuvA specifically binds to HJ cruciform DNA, conferring on it an open structure. The RuvB hexamer acts as an ATP-dependent pump, pulling dsDNA into and through the RuvAB complex. RuvB forms 2 homohexamers on either side of HJ DNA bound by 1 or 2 RuvA tetramers; 4 subunits per hexamer contact DNA at a time. Coordinated motions by a converter formed by DNA-disengaged RuvB subunits stimulates ATP hydrolysis and nucleotide exchange. Immobilization of the converter enables RuvB to convert the ATP-contained energy into a lever motion, pulling 2 nucleotides of DNA out of the RuvA tetramer per ATP hydrolyzed, thus driving DNA branch migration. The RuvB motors rotate together with the DNA substrate, which together with the progressing nucleotide cycle form the mechanistic basis for DNA recombination by continuous HJ branch migration. Branch migration allows RuvC to scan DNA until it finds its consensus sequence, where it cleaves and resolves cruciform DNA. This Alkalilimnicola ehrlichii (strain ATCC BAA-1101 / DSM 17681 / MLHE-1) protein is Holliday junction branch migration complex subunit RuvB.